Reading from the N-terminus, the 330-residue chain is MSNVVVCALYKFVSLPHFESLREPLLSMMEQAEIKGTLLLASEGINGTVAGTQAAIDALLAWLNNQNGLENIVYKLSFDDEMPFYRTKVKLKKEIVTMGVEGIDPLKVVGTYVKPQDWNALISDPEVILVDTRNDYEVQIGTFKNAINPVTETFREFPDYVKQNLDPAKHKKVAMFCTGGIRCEKSTAYLKEQGFEEVYHLEGGILKYLEEVKQEESLWEGECFVFDNRVAVDHDLKKGQYDQCNACRMPITEAEKLSPAYVQGVSCPHCIDKISDEQRKRFVERERQVNLAKSRNEAHIGSDVNQVIEARRQKKEALRQQSAEKNKAKQ.

The Rhodanese domain occupies 123–217 (SDPEVILVDT…YLEEVKQEES (95 aa)). Catalysis depends on C177, which acts as the Cysteine persulfide intermediate.

It belongs to the TrhO family.

It catalyses the reaction uridine(34) in tRNA + AH2 + O2 = 5-hydroxyuridine(34) in tRNA + A + H2O. Its function is as follows. Catalyzes oxygen-dependent 5-hydroxyuridine (ho5U) modification at position 34 in tRNAs. This Shewanella sp. (strain MR-4) protein is tRNA uridine(34) hydroxylase.